A 1887-amino-acid chain; its full sequence is Bifunctional serine/threonine-protein kinase/NEDD4-like E3 ubiquitin-protein ligase (1887 aa).

Disordered stretches follow at residues 19-55 and 72-98; these read TPQV…TTNF and TDNY…TKEN. 2 stretches are compositionally biased toward low complexity: residues 26 to 54 and 72 to 97; these read NNSN…STTN and TDNY…NTKE. RCC1 repeat units follow at residues 206-260, 262-314, 356-409, 411-470, 472-528, and 529-581; these read QGNL…ALTI, GKVY…NNNN, KGLL…VLTN, GLVF…AISD, NDTY…AMSI, and DGSL…IVEK. Residues 299-333 form a disordered region; the sequence is NNNNNNNNNNSTNNNNNNNNDGAQQQFSLSQNSSS. 3 disordered regions span residues 594-619, 823-858, and 1030-1088; these read LPSS…SDSN, VLVH…KNGT, and DDDN…NNNN. Basic and acidic residues predominate over residues 825 to 839; that stretch reads VHQDEKQQQREKSET. Residues 840–852 show a composition bias toward acidic residues; sequence ELEEEQDEEEEDS. A compositionally biased stretch (low complexity) spans 1036-1088; it reads ENNSVNNNSNNNNNNNNNNNNNNNNNNNNNNNIDNNINSNSINDSSNNNNNNN. Residues 1158–1437 enclose the Protein kinase domain; it reads YDIIKTLSTH…AHQIAVHPYF (280 aa). ATP contacts are provided by residues 1164–1172 and K1184; that span reads LSTHPHNVY. D1281 functions as the Proton acceptor in the catalytic mechanism. An HECT domain is found at 1501–1887; the sequence is ESNKLFCRLE…LEYVDGFAFI (387 aa). Positions 1586 to 1628 are disordered; it reads NNNNNNEENNNNNNNNNNNNNNNNNNNNNNNNNNNNNNNNNEE. Residue C1855 is the Glycyl thioester intermediate of the active site.

It in the N-terminal section; belongs to the protein kinase superfamily. Ser/Thr protein kinase family. This sequence in the C-terminal section; belongs to the protein kinase superfamily. CAMK Ser/Thr protein kinase family.

The enzyme catalyses L-seryl-[protein] + ATP = O-phospho-L-seryl-[protein] + ADP + H(+). It carries out the reaction L-threonyl-[protein] + ATP = O-phospho-L-threonyl-[protein] + ADP + H(+). It catalyses the reaction S-ubiquitinyl-[E2 ubiquitin-conjugating enzyme]-L-cysteine + [acceptor protein]-L-lysine = [E2 ubiquitin-conjugating enzyme]-L-cysteine + N(6)-ubiquitinyl-[acceptor protein]-L-lysine.. It functions in the pathway protein modification; protein ubiquitination. The chain is Bifunctional serine/threonine-protein kinase/NEDD4-like E3 ubiquitin-protein ligase from Dictyostelium discoideum (Social amoeba).